The following is a 412-amino-acid chain: MALIVQKFGGTSVGTVERIEQVAEKVKKFRDGGDDIVVVVSAMSGETNRLIDLAKQISEQPVPRELDVMVSTGEQVTIALLAMALIKRGVPAVSYTGNQVRILTDSAHTKARILQIDAQRIQRDIKAGRVVVVAGFQGVDEKGNITTLGRGGSDTTGVALAAALKADECQIYTDVDGVYTTDPRVVAKAQRLDKITFEEMLEMASLGSKVLQIRAVEFAGKYSVPLRVLHSFQEGPGTLITLDEEESMEQPIISGIAFNRDEAKLTIRGVPDTPGVAFKILGPISAANVEVDMIVQNVAHDNTTDFTFTVHRNDYNNALQVLQGIAAEMGAREAIGDTNIAKVSIVGVGMRSHAGVASRMFEALAKENINIQMISTSEIKVSVVIEEKYLELAVRALHTAFELDAPAGNTAE.

Residues 265 to 332 (LTIRGVPDTP…QGIAAEMGAR (68 aa)) enclose the ACT domain.

The protein belongs to the aspartokinase family.

The protein localises to the cytoplasm. The catalysed reaction is L-aspartate + ATP = 4-phospho-L-aspartate + ADP. It functions in the pathway amino-acid biosynthesis; L-lysine biosynthesis via DAP pathway; (S)-tetrahydrodipicolinate from L-aspartate: step 1/4. Its pathway is amino-acid biosynthesis; L-methionine biosynthesis via de novo pathway; L-homoserine from L-aspartate: step 1/3. It participates in amino-acid biosynthesis; L-threonine biosynthesis; L-threonine from L-aspartate: step 1/5. Its activity is regulated as follows. Allosterically and strongly feedback inhibited by tryptophan. Addition of lysine alone slightly enhances activity. The simultaneous addition of lysine and tryptophan leads to very strong feedback inhibition of the enzyme. The feedback control by tryptophan is reduced in the presence of the compatible solutes hydroxyectoine or ectoine. Involved in the biosynthesis of L-aspartate-beta-semialdehyde which is a central intermediate in the biosynthesis of different amino acids (L-lysine, L-methionine, L-threonine). Catalyzes the phosphorylation of the beta-carboxyl group of L-aspartate to yield 4-phospho-L-aspartate. In Stutzerimonas stutzeri (strain A1501) (Pseudomonas stutzeri), this protein is Aspartate kinase Ask_LysC (lysC).